The following is a 160-amino-acid chain: Probable nucleoside diphosphate kinase DDB_G0292928 (160 aa).

Residues Lys-12, Phe-61, Arg-103, Thr-109, Arg-122, and Asn-132 each contribute to the ATP site. The Pros-phosphohistidine intermediate role is filled by His-135.

It belongs to the NDK family. The cofactor is Mg(2+).

It catalyses the reaction a 2'-deoxyribonucleoside 5'-diphosphate + ATP = a 2'-deoxyribonucleoside 5'-triphosphate + ADP. It carries out the reaction a ribonucleoside 5'-diphosphate + ATP = a ribonucleoside 5'-triphosphate + ADP. This chain is Probable nucleoside diphosphate kinase DDB_G0292928, found in Dictyostelium discoideum (Social amoeba).